The primary structure comprises 320 residues: Pyrroline-5-carboxylate reductase 2 (320 aa).

Residue S2 is modified to N-acetylserine. NADP(+) is bound by residues 6–11 (IGAGQL) and S34. 9 residues coordinate NADPH: A8, Q10, L11, S34, E36, N56, V70, K71, and A97. Residues N56, 69–72 (AVKP), and 95–97 (CAA) contribute to the NADP(+) site. Residue E164 participates in L-proline binding. NADPH is bound at residue N230. L-proline is bound by residues A237 and T238. A disordered region spans residues 293-320 (ESPTVSTLAPPSSGKLLTRNPAQGSKRE). A Phosphoserine modification is found at S304.

Belongs to the pyrroline-5-carboxylate reductase family. In terms of assembly, homodecamer; composed of 5 homodimers. Interacts with LTO1.

It localises to the cytoplasm. It is found in the mitochondrion. The catalysed reaction is L-proline + NADP(+) = (S)-1-pyrroline-5-carboxylate + NADPH + 2 H(+). The enzyme catalyses L-proline + NAD(+) = (S)-1-pyrroline-5-carboxylate + NADH + 2 H(+). It functions in the pathway amino-acid biosynthesis; L-proline biosynthesis; L-proline from L-glutamate 5-semialdehyde: step 1/1. In terms of biological role, oxidoreductase that catalyzes the last step in proline biosynthesis, which corresponds to the reduction of pyrroline-5-carboxylate to L-proline using NAD(P)H. At physiologic concentrations, has higher specific activity in the presence of NADH. Involved in cellular response to oxidative stress. In some cell types, such as erythrocytes, its primary function may be the generation of NADP(+). This chain is Pyrroline-5-carboxylate reductase 2, found in Rattus norvegicus (Rat).